A 1706-amino-acid polypeptide reads, in one-letter code: PR domain zinc finger protein 2 (1706 aa).

An SET domain is found at E27–N140. The tract at residues E154 to R342 is disordered. Positions A158–R183 are enriched in basic residues. Residues H185–A199 are compositionally biased toward polar residues. The segment covering T258–M294 has biased composition (acidic residues). Residues S299–D313 are compositionally biased toward basic and acidic residues. 2 C2H2-type zinc fingers span residues F355–H377 and F385–H407. Disordered regions lie at residues R400–Q446, R492–G542, and L618–P655. The residue at position 416 (S416) is a Phosphoserine. Residues D427–S439 show a composition bias toward basic and acidic residues. A C2H2-type 3 zinc finger spans residues H476–H499. S637 is modified (phosphoserine). Residues K645, K684, and K686 each participate in a glycyl lysine isopeptide (Lys-Gly) (interchain with G-Cter in SUMO2) cross-link. Disordered stretches follow at residues T724–C794, S823–V1075, and V1088–Q1112. The segment covering S733–P743 has biased composition (low complexity). Residue S738 is modified to Phosphoserine. K769 is covalently cross-linked (Glycyl lysine isopeptide (Lys-Gly) (interchain with G-Cter in SUMO2)). Phosphoserine is present on residues S776, S780, and S791. Over residues S823 to T832 the composition is skewed to polar residues. A compositionally biased stretch (basic and acidic residues) spans S846–H863. Glycyl lysine isopeptide (Lys-Gly) (interchain with G-Cter in SUMO2) cross-links involve residues K860 and K870. Composition is skewed to polar residues over residues S891–T912 and L943–Q952. Positions P962–P983 are enriched in pro residues. Residues D993–Q1009 show a composition bias toward polar residues. Residues S1010–V1019 are compositionally biased toward low complexity. Residues S1020–E1030 show a composition bias toward pro residues. Low complexity predominate over residues S1034 to S1062. Basic and acidic residues predominate over residues K1091–A1106. C2H2-type zinc fingers lie at residues F1123 to H1145, F1151 to H1174, and F1180 to H1203. Residues K1136 and K1140 each participate in a glycyl lysine isopeptide (Lys-Gly) (interchain with G-Cter in SUMO2) cross-link. Positions L1218 to S1227 are enriched in polar residues. The disordered stretch occupies residues L1218–N1251. A Glycyl lysine isopeptide (Lys-Gly) (interchain with G-Cter in SUMO2) cross-link involves residue K1269. Residues I1321–C1343 form a C2H2-type 7; atypical zinc finger. The C2H2-type 8; atypical zinc-finger motif lies at H1443–S1465. Residues C1466 to N1563 are disordered. Positions S1474 to G1486 are enriched in basic residues. Low complexity predominate over residues H1487 to S1498. Over residues G1528–N1544 the composition is skewed to polar residues. Residues A1548–N1563 show a composition bias toward low complexity.

It belongs to the class V-like SAM-binding methyltransferase superfamily. As to quaternary structure, binds to the retinoblastoma protein (RB). Interacts with GATA3.

It is found in the nucleus. The enzyme catalyses L-lysyl-[histone] + S-adenosyl-L-methionine = N(6)-methyl-L-lysyl-[histone] + S-adenosyl-L-homocysteine + H(+). The catalysed reaction is L-lysyl(9)-[histone H3] + 3 S-adenosyl-L-methionine = N(6),N(6),N(6)-trimethyl-L-lysyl(9)-[histone H3] + 3 S-adenosyl-L-homocysteine + 3 H(+). In terms of biological role, S-adenosyl-L-methionine-dependent histone methyltransferase that specifically methylates 'Lys-9' of histone H3. May function as a DNA-binding transcription factor. Binds to the macrophage-specific TPA-responsive element (MTE) of the HMOX1 (heme oxygenase 1) gene and may act as a transcriptional activator of this gene. This chain is PR domain zinc finger protein 2 (Prdm2), found in Rattus norvegicus (Rat).